The chain runs to 309 residues: Curved DNA-binding protein (309 aa).

A J domain is found at 5-69 (DYYAILGVKP…ERRAEYDQLR (65 aa)).

The protein resides in the cytoplasm. It is found in the nucleoid. Its function is as follows. DNA-binding protein that preferentially recognizes a curved DNA sequence. It is probably a functional analog of DnaJ; displays overlapping activities with DnaJ, but functions under different conditions, probably acting as a molecular chaperone in an adaptive response to environmental stresses other than heat shock. Lacks autonomous chaperone activity; binds native substrates and targets them for recognition by DnaK. Its activity is inhibited by the binding of CbpM. The chain is Curved DNA-binding protein from Serratia proteamaculans (strain 568).